The primary structure comprises 314 residues: WD repeat-containing protein 38 (314 aa).

WD repeat units follow at residues 19–58 (QHGGEVNSSAFSPDGQMLLTGSEDGCVYGWETRSGQLLWR), 61–100 (GHTGPVKFCRFSPDGHLFASASCDCTVRLWDVARAKCLRV), 103–142 (GHQRSVETVSFSPDSRQLASGGWDKRVMLWDVQSGQMLRL), 145–184 (GHRDSIQSSDFSPTVNCLATGSWDSTVHIWDLRMVTPAVS), 190–228 (GHSANISCLCYSASGLLASGSWDKTIHIWKPTTSSLLIQ), 231–272 (GHVT…ETLK), and 274–312 (VLDVAHTCAFTPDGKILVSGAADQTRRQISRTSKSPRDP). The interval 294–314 (AADQTRRQISRTSKSPRDPQT) is disordered.

In Homo sapiens (Human), this protein is WD repeat-containing protein 38 (WDR38).